We begin with the raw amino-acid sequence, 178 residues long: Large ribosomal subunit protein uL6 (178 aa).

It belongs to the universal ribosomal protein uL6 family. In terms of assembly, part of the 50S ribosomal subunit.

This protein binds to the 23S rRNA, and is important in its secondary structure. It is located near the subunit interface in the base of the L7/L12 stalk, and near the tRNA binding site of the peptidyltransferase center. The polypeptide is Large ribosomal subunit protein uL6 (Campylobacter hominis (strain ATCC BAA-381 / DSM 21671 / CCUG 45161 / LMG 19568 / NCTC 13146 / CH001A)).